A 358-amino-acid chain; its full sequence is Phosphoserine aminotransferase (358 aa).

Residue Arg-41 coordinates L-glutamate. Pyridoxal 5'-phosphate is bound by residues 75 to 76, Trp-100, Thr-148, Asp-167, and Gln-190; that span reads AS. At Lys-191 the chain carries N6-(pyridoxal phosphate)lysine. Pyridoxal 5'-phosphate is bound at residue 233–234; it reads NT.

Belongs to the class-V pyridoxal-phosphate-dependent aminotransferase family. SerC subfamily. Homodimer. Pyridoxal 5'-phosphate serves as cofactor.

It localises to the cytoplasm. The catalysed reaction is O-phospho-L-serine + 2-oxoglutarate = 3-phosphooxypyruvate + L-glutamate. It catalyses the reaction 4-(phosphooxy)-L-threonine + 2-oxoglutarate = (R)-3-hydroxy-2-oxo-4-phosphooxybutanoate + L-glutamate. The protein operates within amino-acid biosynthesis; L-serine biosynthesis; L-serine from 3-phospho-D-glycerate: step 2/3. Its pathway is cofactor biosynthesis; pyridoxine 5'-phosphate biosynthesis; pyridoxine 5'-phosphate from D-erythrose 4-phosphate: step 3/5. In terms of biological role, catalyzes the reversible conversion of 3-phosphohydroxypyruvate to phosphoserine and of 3-hydroxy-2-oxo-4-phosphonooxybutanoate to phosphohydroxythreonine. The chain is Phosphoserine aminotransferase from Campylobacter jejuni subsp. jejuni serotype O:23/36 (strain 81-176).